The primary structure comprises 253 residues: Peptidase inhibitor R3HDML (253 aa).

Residues 1–24 form the signal peptide; the sequence is MPLLPSTVGLAGLLFWAGQAVNAL. The propeptide occupies 25 to 56; that stretch reads IMPNATPAPAQPESTAMRLLSGLEVPRYRRKR. Positions 67–207 constitute an SCP domain; the sequence is LDYHNHIRAS…HRAAYLVCNY (141 aa). An N-linked (GlcNAc...) asparagine glycan is attached at Asn-120.

This sequence belongs to the CRISP family.

Its subcellular location is the secreted. In terms of biological role, putative serine protease inhibitor. In Homo sapiens (Human), this protein is Peptidase inhibitor R3HDML (R3HDML).